A 198-amino-acid chain; its full sequence is UPF0548 protein DR_2035 (198 aa).

This sequence belongs to the UPF0548 family.

This is UPF0548 protein DR_2035 from Deinococcus radiodurans (strain ATCC 13939 / DSM 20539 / JCM 16871 / CCUG 27074 / LMG 4051 / NBRC 15346 / NCIMB 9279 / VKM B-1422 / R1).